A 236-amino-acid polypeptide reads, in one-letter code: Carbonyl reductase family member 4 (236 aa).

NADP(+)-binding positions include Ser11–Ile14, Arg34–Asp35, Asp55, and Ser82–Gly84. Residue Ser134 participates in substrate binding. NADP(+) is bound by residues Tyr147, Lys151, and Ile180 to Thr182. The active-site Proton acceptor is the Tyr147.

The protein belongs to the short-chain dehydrogenases/reductases (SDR) family. In terms of assembly, homotetramer (in vitro). Heterotetramer with HSD17B8; contains two molecules each of HSD17B8 and CBR4.

It localises to the mitochondrion matrix. It participates in lipid metabolism; fatty acid biosynthesis. Functionally, the heterotetramer with HSD17B8 has NADH-dependent 3-ketoacyl-acyl carrier protein reductase activity, and thereby plays a role in mitochondrial fatty acid biosynthesis. Within the heterotetramer, HSD17B8 binds NADH; CBR4 binds NADPD. The homotetramer has NADPH-dependent quinone reductase activity. Both homotetramer and the heterotetramer have broad in vitro substrate specificity and can reduce 9,10-phenanthrenequinone, 1,4-benzoquinone and various other o-quinones and p-quinones. This Xenopus tropicalis (Western clawed frog) protein is Carbonyl reductase family member 4 (cbr4).